Reading from the N-terminus, the 492-residue chain is Probable protein phosphatase 2C 33 (492 aa).

Positions 1-46 (MGSCLSAESRSPRPGSPCSPAFSVRKRKNSKKRPGSRNSSFDYRRE) are disordered. The span at 24 to 35 (VRKRKNSKKRPG) shows a compositional bias: basic residues. Positions 64–393 (VACIYTQQGK…DDCAAVCLYL (330 aa)) constitute a PPM-type phosphatase domain. The Mn(2+) site is built by D100, G101, D338, and D384. Residues 406 to 468 (SISKLEDGEE…ADNLDSEPGT (63 aa)) are disordered. The span at 412 to 427 (DGEEEELKATTEDDDA) shows a compositional bias: acidic residues. Over residues 441 to 460 (SGKEIALDESETEKLIKEAD) the composition is skewed to basic and acidic residues.

Belongs to the PP2C family. Mg(2+) serves as cofactor. The cofactor is Mn(2+).

It catalyses the reaction O-phospho-L-seryl-[protein] + H2O = L-seryl-[protein] + phosphate. The enzyme catalyses O-phospho-L-threonyl-[protein] + H2O = L-threonyl-[protein] + phosphate. This Arabidopsis thaliana (Mouse-ear cress) protein is Probable protein phosphatase 2C 33 (PPC6-1).